The sequence spans 348 residues: MTAPSQVLKIRRPDDWHLHLRDGDMLKTVVPYTSEIYGRAIVMPNLAPPVTTVEAAVAYRQRILHAVPAGHDFTPLMTCYLTDSLDPNELERGFNEGVFTAAKLYPANATTNSSHGVTSVDAIMPVLERMEKIGMPLLVHGEVTHADIDIFDREARFIESVMEPLRQRLTALKVVFEHITTKDAADYVRDGNERLAATITPQHLMFNRNHMLVGGVRPHLYCLPILKRNIHQQALRELVASGFNRVFLGTDSAPHARHRKESSCGCAGCFNAPTALGSYATVFEEMNALQHFEAFCSVNGPQFYGLPVNDTFIELVREEHQVAESIALTDDTLVPFLAGETVRWSVKQ.

Zn(2+) contacts are provided by H17 and H19. Residues 19–21 (HLR) and N45 contribute to the substrate site. Positions 103, 140, and 178 each coordinate Zn(2+). Position 103 is an N6-carboxylysine (K103). Residue H140 participates in substrate binding. L223 is a binding site for substrate. D251 is a binding site for Zn(2+). D251 is an active-site residue. Substrate-binding residues include H255 and A267.

The protein belongs to the metallo-dependent hydrolases superfamily. DHOase family. Class II DHOase subfamily. In terms of assembly, homodimer. Zn(2+) is required as a cofactor.

It carries out the reaction (S)-dihydroorotate + H2O = N-carbamoyl-L-aspartate + H(+). It participates in pyrimidine metabolism; UMP biosynthesis via de novo pathway; (S)-dihydroorotate from bicarbonate: step 3/3. Catalyzes the reversible cyclization of carbamoyl aspartate to dihydroorotate. This is Dihydroorotase from Escherichia coli O157:H7.